The sequence spans 721 residues: Polyribonucleotide nucleotidyltransferase (721 aa).

D495 and D501 together coordinate Mg(2+). One can recognise a KH domain in the interval 562–621; the sequence is PRLLSFRIDPELIGTVIGPGGRTIKGITERTNTKIDIEDSGIVTIASHDGAAADEAQKII. Positions 631–699 constitute an S1 motif domain; sequence GEVFSGSITR…NRGRINLTLR (69 aa). The interval 698 to 721 is disordered; it reads LRGVPQSGDGAGEEPQPTPVAPLS.

The protein belongs to the polyribonucleotide nucleotidyltransferase family. Requires Mg(2+) as cofactor.

It localises to the cytoplasm. It carries out the reaction RNA(n+1) + phosphate = RNA(n) + a ribonucleoside 5'-diphosphate. In terms of biological role, involved in mRNA degradation. Catalyzes the phosphorolysis of single-stranded polyribonucleotides processively in the 3'- to 5'-direction. The polypeptide is Polyribonucleotide nucleotidyltransferase (Parasynechococcus marenigrum (strain WH8102)).